The sequence spans 876 residues: Alanine--tRNA ligase (876 aa).

4 residues coordinate Zn(2+): histidine 568, histidine 572, cysteine 669, and histidine 673.

The protein belongs to the class-II aminoacyl-tRNA synthetase family. The cofactor is Zn(2+).

The protein resides in the cytoplasm. The enzyme catalyses tRNA(Ala) + L-alanine + ATP = L-alanyl-tRNA(Ala) + AMP + diphosphate. Its function is as follows. Catalyzes the attachment of alanine to tRNA(Ala) in a two-step reaction: alanine is first activated by ATP to form Ala-AMP and then transferred to the acceptor end of tRNA(Ala). Also edits incorrectly charged Ser-tRNA(Ala) and Gly-tRNA(Ala) via its editing domain. The protein is Alanine--tRNA ligase of Sulfurihydrogenibium sp. (strain YO3AOP1).